A 223-amino-acid chain; its full sequence is Deoxyribose-phosphate aldolase 2 (223 aa).

The active-site Proton donor/acceptor is the aspartate 92. The active-site Schiff-base intermediate with acetaldehyde is the lysine 154. Lysine 183 serves as the catalytic Proton donor/acceptor.

The protein belongs to the DeoC/FbaB aldolase family. DeoC type 1 subfamily.

It is found in the cytoplasm. The catalysed reaction is 2-deoxy-D-ribose 5-phosphate = D-glyceraldehyde 3-phosphate + acetaldehyde. The protein operates within carbohydrate degradation; 2-deoxy-D-ribose 1-phosphate degradation; D-glyceraldehyde 3-phosphate and acetaldehyde from 2-deoxy-alpha-D-ribose 1-phosphate: step 2/2. Functionally, catalyzes a reversible aldol reaction between acetaldehyde and D-glyceraldehyde 3-phosphate to generate 2-deoxy-D-ribose 5-phosphate. This is Deoxyribose-phosphate aldolase 2 from Oceanobacillus iheyensis (strain DSM 14371 / CIP 107618 / JCM 11309 / KCTC 3954 / HTE831).